The primary structure comprises 267 residues: O-methyltransferase (267 aa).

S-adenosyl-L-methionine is bound by residues Gln-100 and His-145.

This sequence belongs to the methyltransferase superfamily.

The protein operates within antifungal biosynthesis. In terms of biological role, O-methyltransferase; part of the gene cluster that mediates the biosynthesis of the tetrahydropyranyl antifungal agent lanomycin that acts as an inhibitor of CYP51 and blocks the ergosterol biosynthesis. The biosynthesis probably begins with the formation of an hexaketide, followed by methionine mediated alkylation of C-2 and C-6, and methylation of the reduced C-3 oxygen, pyran forming reductive ring closure, oxygenation of C-4, beta-keto reduction, enoyl reduction and dehydration of the remaining oxygens, and finally, acylation with glycine to complete the biosynthesis. The polypeptide is O-methyltransferase (Pyrenophora dematioidea (Helminthosporium dematioideum)).